The sequence spans 116 residues: Large ribosomal subunit protein bL20c (116 aa).

It belongs to the bacterial ribosomal protein bL20 family.

The protein localises to the plastid. It is found in the chloroplast. Functionally, binds directly to 23S ribosomal RNA and is necessary for the in vitro assembly process of the 50S ribosomal subunit. It is not involved in the protein synthesizing functions of that subunit. The chain is Large ribosomal subunit protein bL20c from Cyanidioschyzon merolae (strain NIES-3377 / 10D) (Unicellular red alga).